A 314-amino-acid chain; its full sequence is MTGGCPTRPRVIVLCGPTGVGKTRLAIALAEEFGGQIVGADSMQVYRYMDIGTAKPTPAEQARVPHHMIDVADPDESFSAGRYARMARPILMDLNEQGVLPVLAGGTGLYIKACLHGLFRKHSADKAVLERLEREANDQGSAVLHQRLAVCDPETAERIHPNDRFRIVRALEVFESTGLPASGHRQAHGFAEDPFDALKICLHLDRKTLYGRINHRVDLMLADGFEKEVAGLLARGYAPELKAMQSIGYRHMTAWLAGGISRETAVENMKKDTRRYAKRQETWFKADPDMVWVDQKEGLEKVPFLVKRFLRYGK.

16–23 (GPTGVGKT) provides a ligand contact to ATP. 18 to 23 (TGVGKT) is a binding site for substrate. The segment at 41-44 (DSMQ) is interaction with substrate tRNA.

Belongs to the IPP transferase family. In terms of assembly, monomer. Mg(2+) is required as a cofactor.

The catalysed reaction is adenosine(37) in tRNA + dimethylallyl diphosphate = N(6)-dimethylallyladenosine(37) in tRNA + diphosphate. Its function is as follows. Catalyzes the transfer of a dimethylallyl group onto the adenine at position 37 in tRNAs that read codons beginning with uridine, leading to the formation of N6-(dimethylallyl)adenosine (i(6)A). The chain is tRNA dimethylallyltransferase from Desulfosudis oleivorans (strain DSM 6200 / JCM 39069 / Hxd3) (Desulfococcus oleovorans).